The sequence spans 1330 residues: Sister chromatid cohesion protein PDS5 homolog A (1330 aa).

An HEAT repeat occupies 387–423; it reads SLVNDQLLGFVRERTLDKRWRVRKEAMMGLAQLYKKY. The tract at residues 1138 to 1330 is disordered; sequence VNKPLSATGR…AAQRQIDLQR (193 aa). Low complexity predominate over residues 1160 to 1171; that stretch reads SNISVNSELSSS. Residues 1216–1225 are compositionally biased toward polar residues; it reads SDQATQGNST.

The protein belongs to the PDS5 family. In terms of assembly, interacts with the cohesin complex. Binds chromatin in a cohesin-dependent manner.

The protein resides in the nucleus. Functionally, may regulate sister chromatid cohesion during mitosis and couple it to DNA replication. The polypeptide is Sister chromatid cohesion protein PDS5 homolog A (Gallus gallus (Chicken)).